A 294-amino-acid polypeptide reads, in one-letter code: ATP phosphoribosyltransferase (294 aa).

The protein belongs to the ATP phosphoribosyltransferase family. Long subfamily. It depends on Mg(2+) as a cofactor.

The protein localises to the cytoplasm. It catalyses the reaction 1-(5-phospho-beta-D-ribosyl)-ATP + diphosphate = 5-phospho-alpha-D-ribose 1-diphosphate + ATP. Its pathway is amino-acid biosynthesis; L-histidine biosynthesis; L-histidine from 5-phospho-alpha-D-ribose 1-diphosphate: step 1/9. Feedback inhibited by histidine. Functionally, catalyzes the condensation of ATP and 5-phosphoribose 1-diphosphate to form N'-(5'-phosphoribosyl)-ATP (PR-ATP). Has a crucial role in the pathway because the rate of histidine biosynthesis seems to be controlled primarily by regulation of HisG enzymatic activity. The sequence is that of ATP phosphoribosyltransferase from Pelodictyon phaeoclathratiforme (strain DSM 5477 / BU-1).